Here is a 182-residue protein sequence, read N- to C-terminus: Inner membrane-spanning protein YciB (182 aa).

Transmembrane regions (helical) follow at residues 20–42 (GGIYQATIVAMVATIVQILWVYY), 55–75 (LIMIMVFGSLTIFLHDSTFIL), 76–96 (LKPTALYWLFSGVLFVSAQFF), 123–143 (LNLAWSAFFFFMGFLNLYIAF), and 153–173 (FKLFGSTGLLIAFVIAQGFWM).

The protein belongs to the YciB family.

The protein localises to the cell inner membrane. Plays a role in cell envelope biogenesis, maintenance of cell envelope integrity and membrane homeostasis. In Polynucleobacter asymbioticus (strain DSM 18221 / CIP 109841 / QLW-P1DMWA-1) (Polynucleobacter necessarius subsp. asymbioticus), this protein is Inner membrane-spanning protein YciB.